A 1816-amino-acid polypeptide reads, in one-letter code: Laminin subunit alpha-4 (1816 aa).

The signal sequence occupies residues 1–24 (MGWSTAWCSVLALWLLWCAVCSNA). The O-linked (Xyl...) (chondroitin sulfate) serine glycan is linked to serine 39. Cystine bridges form between cysteine 82–cysteine 91, cysteine 84–cysteine 98, cysteine 101–cysteine 110, cysteine 113–cysteine 129, cysteine 132–cysteine 146, cysteine 134–cysteine 155, cysteine 157–cysteine 166, cysteine 169–cysteine 184, cysteine 187–cysteine 202, cysteine 189–cysteine 209, cysteine 212–cysteine 221, and cysteine 224–cysteine 238. Laminin EGF-like domains are found at residues 82-131 (CDCN…FCQP), 132-186 (CPCP…TCKK), and 187-240 (CDCS…NCAV). An N-linked (GlcNAc...) asparagine glycan is attached at asparagine 104. Asparagine 215 carries an N-linked (GlcNAc...) asparagine glycan. The region spanning 241–255 (CNCGGGPCDSVTGEC) is the Laminin EGF-like 4; truncated domain. The interval 256-825 (LEEGFEVPTG…AQTRSVASKI (570 aa)) is domain II and I. N-linked (GlcNAc...) asparagine glycosylation is found at asparagine 308, asparagine 333, asparagine 458, asparagine 550, asparagine 571, asparagine 574, asparagine 631, and asparagine 639. The stretch at 431–523 (THRELVDEEA…ERVKEQMEVV (93 aa)) forms a coiled coil. A coiled-coil region spans residues 556–604 (AEIDGAKNELQGKLSNLSNLSHDLVQEATDHAYNLQQEADELSRNLHSS). Residues 655–717 (IIYHKDESDN…AVKQLQAAER (63 aa)) adopt a coiled-coil conformation. The Cell attachment site signature appears at 717 to 719 (RGD). 5 N-linked (GlcNAc...) asparagine glycosylation sites follow: asparagine 735, asparagine 751, asparagine 754, asparagine 780, and asparagine 803. A coiled-coil region spans residues 770–799 (AVDSARDAVRNLTEVVPQLLDQLRTVEQKR). Laminin G-like domains lie at 826-1030 (QVSM…SVPC), 1042-1222 (AASY…GYGC), and 1229-1397 (SRRA…LYEC). An intrachain disulfide couples cysteine 1000 to cysteine 1030. Residue asparagine 1088 is glycosylated (N-linked (GlcNAc...) asparagine). Cysteine 1196 and cysteine 1222 are oxidised to a cystine. 2 N-linked (GlcNAc...) asparagine glycosylation sites follow: asparagine 1283 and asparagine 1361. Cysteines 1365 and 1397 form a disulfide. Over residues 1409–1419 (KKGKNSSKPKT) the composition is skewed to basic residues. The interval 1409 to 1433 (KKGKNSSKPKTNKQGEKSKDAPSWD) is disordered. Positions 1421–1430 (KQGEKSKDAP) are enriched in basic and acidic residues. 2 Laminin G-like domains span residues 1462–1633 (AYQY…VTPC) and 1640–1813 (TGTY…INSC). 2 disulfide bridges follow: cysteine 1610/cysteine 1633 and cysteine 1785/cysteine 1813.

As to quaternary structure, laminin is a complex glycoprotein, consisting of three different polypeptide chains (alpha, beta, gamma), which are bound to each other by disulfide bonds into a cross-shaped molecule comprising one long and three short arms with globules at each end. Alpha-4 is a subunit of laminin-8 (laminin-411), laminin-9 (laminin-421) and laminin-14 (laminin-423). As to expression, strongly expressed in peripheral nerves, cardiac muscle, fat, dermis, lung stroma, aortic endothelium, endocardium and endothelium of blood vessels in skin and brain.

The protein resides in the secreted. It is found in the extracellular space. It localises to the extracellular matrix. The protein localises to the basement membrane. Its function is as follows. Binding to cells via a high affinity receptor, laminin is thought to mediate the attachment, migration and organization of cells into tissues during embryonic development by interacting with other extracellular matrix components. This chain is Laminin subunit alpha-4 (Lama4), found in Mus musculus (Mouse).